The primary structure comprises 416 residues: Putative serine protease HhoB (416 aa).

Residues 1–25 (MAIHLKASHLGVAVLLLLFGGAIGA) form the signal peptide. Positions 35-53 (GQNHSSPDSPVNTSPQSLT) are enriched in polar residues. Residues 35–57 (GQNHSSPDSPVNTSPQSLTPAPV) form a disordered region. One can recognise a PDZ domain in the interval 320 to 398 (EMTKQLRTSG…PLAIAVKRGQ (79 aa)).

This sequence belongs to the peptidase S1C family.

Its function is as follows. A putative protease, its function overlaps that of the related putative proteases HtrA and HhoA. The sequence is that of Putative serine protease HhoB (hhoB) from Synechocystis sp. (strain ATCC 27184 / PCC 6803 / Kazusa).